The following is a 757-amino-acid chain: Xaa-Pro dipeptidyl-peptidase (757 aa).

Catalysis depends on charge relay system residues Ser348, Asp468, and His498.

The protein belongs to the peptidase S15 family. In terms of assembly, homodimer.

It is found in the cytoplasm. The catalysed reaction is Hydrolyzes Xaa-Pro-|- bonds to release unblocked, N-terminal dipeptides from substrates including Ala-Pro-|-p-nitroanilide and (sequentially) Tyr-Pro-|-Phe-Pro-|-Gly-Pro-|-Ile.. In terms of biological role, removes N-terminal dipeptides sequentially from polypeptides having unsubstituted N-termini provided that the penultimate residue is proline. The polypeptide is Xaa-Pro dipeptidyl-peptidase (Streptococcus pneumoniae (strain P1031)).